We begin with the raw amino-acid sequence, 309 residues long: Ribonuclease Z (309 aa).

Histidine 63, histidine 65, aspartate 67, histidine 68, histidine 141, aspartate 212, and histidine 270 together coordinate Zn(2+). The active-site Proton acceptor is the aspartate 67.

It belongs to the RNase Z family. As to quaternary structure, homodimer. The cofactor is Zn(2+).

The enzyme catalyses Endonucleolytic cleavage of RNA, removing extra 3' nucleotides from tRNA precursor, generating 3' termini of tRNAs. A 3'-hydroxy group is left at the tRNA terminus and a 5'-phosphoryl group is left at the trailer molecule.. Functionally, zinc phosphodiesterase, which displays some tRNA 3'-processing endonuclease activity. Probably involved in tRNA maturation, by removing a 3'-trailer from precursor tRNA. In Lactobacillus delbrueckii subsp. bulgaricus (strain ATCC 11842 / DSM 20081 / BCRC 10696 / JCM 1002 / NBRC 13953 / NCIMB 11778 / NCTC 12712 / WDCM 00102 / Lb 14), this protein is Ribonuclease Z.